A 203-amino-acid polypeptide reads, in one-letter code: LexA repressor (203 aa).

The H-T-H motif DNA-binding region spans 30–50; sequence VREICQAVSLKSTSTVHGHLK. Residues serine 127 and lysine 164 each act as for autocatalytic cleavage activity in the active site.

This sequence belongs to the peptidase S24 family. In terms of assembly, homodimer.

The catalysed reaction is Hydrolysis of Ala-|-Gly bond in repressor LexA.. Functionally, represses a number of genes involved in the response to DNA damage (SOS response), including recA and lexA. In the presence of single-stranded DNA, RecA interacts with LexA causing an autocatalytic cleavage which disrupts the DNA-binding part of LexA, leading to derepression of the SOS regulon and eventually DNA repair. In Clostridium perfringens (strain SM101 / Type A), this protein is LexA repressor.